The chain runs to 188 residues: Elongation factor P (188 aa).

At lysine 34 the chain carries N6-(3,6-diaminohexanoyl)-5-hydroxylysine.

It belongs to the elongation factor P family. Post-translationally, may be beta-lysylated on the epsilon-amino group of Lys-34 by the combined action of EpmA and EpmB, and then hydroxylated on the C5 position of the same residue by EpmC (if this protein is present). Lysylation is critical for the stimulatory effect of EF-P on peptide-bond formation. The lysylation moiety may extend toward the peptidyltransferase center and stabilize the terminal 3-CCA end of the tRNA. Hydroxylation of the C5 position on Lys-34 may allow additional potential stabilizing hydrogen-bond interactions with the P-tRNA.

Its subcellular location is the cytoplasm. The protein operates within protein biosynthesis; polypeptide chain elongation. Its function is as follows. Involved in peptide bond synthesis. Alleviates ribosome stalling that occurs when 3 or more consecutive Pro residues or the sequence PPG is present in a protein, possibly by augmenting the peptidyl transferase activity of the ribosome. Modification of Lys-34 is required for alleviation. The polypeptide is Elongation factor P (Actinobacillus succinogenes (strain ATCC 55618 / DSM 22257 / CCUG 43843 / 130Z)).